Reading from the N-terminus, the 350-residue chain is Transcriptional activator hacA (350 aa).

Positions 1-118 (MKSADRFSPV…RLEMEKLESE (118 aa)) are disordered. Residues 35 to 47 (PADTSLQTKNVVA) are compositionally biased toward polar residues. Basic and acidic residues-rich tracts occupy residues 81 to 95 (KTED…ERVL) and 104 to 118 (SRER…LESE). The 64-residue stretch at 87–150 (EQRRIERVLR…NRLSQQVAQL (64 aa)) folds into the bZIP domain. Positions 89–142 (RRIERVLRNRAAAQTSRERKRLEMEKLESEKIDMEQQNQFLLQRLAQMEAENNR) are basic motif. Residues 143–150 (LSQQVAQL) are leucine-zipper. Disordered stretches follow at residues 152–175 (AEVR…PTLT), 194–218 (PTPS…DLTQ), and 328–350 (SLQP…AGSA). Over residues 160–175 (STPTSSSPASVSPTLT) the composition is skewed to low complexity. Polar residues-rich tracts occupy residues 196 to 211 (PSVT…SSLA) and 329 to 340 (LQPSHGASTSRC).

It belongs to the bZIP family. Homodimer.

The protein localises to the nucleus. Functionally, transcriptional activator involved in the unfolded protein response (UPR) pathway. Recognizes and binds to the UPR element (UPRE) in the promoter of UPR-regulated genes. Increases the synthesis of endoplasmic reticulum-resident proteins required for protein folding as well as components of the secretory pathway. In Emericella nidulans (strain FGSC A4 / ATCC 38163 / CBS 112.46 / NRRL 194 / M139) (Aspergillus nidulans), this protein is Transcriptional activator hacA (hacA).